The following is a 321-amino-acid chain: Lactamase-like protein notP (321 aa).

Zn(2+) contacts are provided by His-108, His-110, Asp-112, and His-113. Asp-112 (proton donor/acceptor) is an active-site residue.

Belongs to the metallo-beta-lactamase superfamily. Zn(2+) is required as a cofactor.

In terms of biological role, lactamase-like protein; part of the gene cluster that mediates the biosynthesis of notoamide, a fungal indole alkaloid that belongs to a family of natural products containing a characteristic bicyclo[2.2.2]diazaoctane core. The first step of notoamide biosynthesis involves coupling of L-proline and L-tryptophan by the bimodular NRPS notE, to produce cyclo-L-tryptophan-L-proline called brevianamide F. The reverse prenyltransferase notF then acts as a deoxybrevianamide E synthase and converts brevianamide F to deoxybrevianamide E via reverse prenylation at C-2 of the indole ring leading to the bicyclo[2.2.2]diazaoctane core. Deoxybrevianamide E is further hydroxylated at C-6 of the indole ring, likely catalyzed by the cytochrome P450 monooxygenase notG, to yield 6-hydroxy-deoxybrevianamide E. 6-hydroxy-deoxybrevianamide E is a specific substrate of the prenyltransferase notC for normal prenylation at C-7 to produce 6-hydroxy-7-prenyl-deoxybrevianamide, also called notoamide S. As the proposed pivotal branching point in notoamide biosynthesis, notoamide S can be diverted to notoamide E through an oxidative pyran ring closure putatively catalyzed by either notH cytochrome P450 monooxygenase or the notD FAD-linked oxidoreductase. This step would be followed by an indole 2,3-epoxidation-initiated pinacol-like rearrangement catalyzed by the notB FAD-dependent monooxygenase leading to the formation of notoamide C and notoamide D. On the other hand notoamide S is converted to notoamide T by notH (or notD), a bifunctional oxidase that also functions as the intramolecular Diels-Alderase responsible for generation of (+)-notoamide T. To generate antipodal (-)-notoaminide T, notH' (or notD') in Aspergillus versicolor is expected to catalyze a Diels-Alder reaction leading to the opposite stereochemistry. The remaining oxidoreductase notD (or notH) likely catalyzes the oxidative pyran ring formation to yield (+)-stephacidin A. The FAD-dependent monooxygenase notI is highly similar to notB and is predicted to catalyze a similar conversion from (+)-stephacidin A to (-)-notoamide B via the 2,3-epoxidation of (+)-stephacidin A followed by a pinacol-type rearrangement. Finally, it remains unclear which enzyme could be responsible for the final hydroxylation steps leading to notoamide A and sclerotiamide. The function of notP in the notoamide biosynthesis has not been determined yet. This is Lactamase-like protein notP from Aspergillus sp. (strain MF297-2).